The chain runs to 204 residues: Ribosome maturation factor RimP (204 aa).

The protein belongs to the RimP family.

The protein localises to the cytoplasm. In terms of biological role, required for maturation of 30S ribosomal subunits. The polypeptide is Ribosome maturation factor RimP (Allorhizobium ampelinum (strain ATCC BAA-846 / DSM 112012 / S4) (Agrobacterium vitis (strain S4))).